We begin with the raw amino-acid sequence, 199 residues long: Large ribosomal subunit protein eL13A (199 aa).

Thr-144 and Thr-152 each carry phosphothreonine.

This sequence belongs to the eukaryotic ribosomal protein eL13 family. Component of the large ribosomal subunit (LSU). Mature yeast ribosomes consist of a small (40S) and a large (60S) subunit. The 40S small subunit contains 1 molecule of ribosomal RNA (18S rRNA) and 33 different proteins (encoded by 57 genes). The large 60S subunit contains 3 rRNA molecules (25S, 5.8S and 5S rRNA) and 46 different proteins (encoded by 81 genes).

It localises to the cytoplasm. Its function is as follows. Component of the ribosome, a large ribonucleoprotein complex responsible for the synthesis of proteins in the cell. The small ribosomal subunit (SSU) binds messenger RNAs (mRNAs) and translates the encoded message by selecting cognate aminoacyl-transfer RNA (tRNA) molecules. The large subunit (LSU) contains the ribosomal catalytic site termed the peptidyl transferase center (PTC), which catalyzes the formation of peptide bonds, thereby polymerizing the amino acids delivered by tRNAs into a polypeptide chain. The nascent polypeptides leave the ribosome through a tunnel in the LSU and interact with protein factors that function in enzymatic processing, targeting, and the membrane insertion of nascent chains at the exit of the ribosomal tunnel. This Saccharomyces cerevisiae (strain ATCC 204508 / S288c) (Baker's yeast) protein is Large ribosomal subunit protein eL13A.